A 264-amino-acid polypeptide reads, in one-letter code: Heavy metal-associated isoprenylated plant protein 17 (264 aa).

HMA domains lie at 32-95 (VTDA…KKIE) and 133-204 (IMEV…KERQ). Positions 185-218 (SRKLNKKMHQKIKKAEKERQEWESEMMLREAEEE) form a coiled coil. Cysteine 261 carries the cysteine methyl ester modification. The S-farnesyl cysteine moiety is linked to residue cysteine 261. Residues 262 to 264 (SIS) constitute a propeptide, removed in mature form.

Belongs to the HIPP family.

Its function is as follows. Probable heavy-metal-binding protein. In Arabidopsis thaliana (Mouse-ear cress), this protein is Heavy metal-associated isoprenylated plant protein 17.